Here is a 181-residue protein sequence, read N- to C-terminus: MDPRTLSALKDAIRSIPDYPKPGIVFRDITTLLGDPGAFRRAVDALVHPFAGGRIDRVAGIEARGFILGGAVAHQLSSGFVPIRKKGKLPHTTVSIAYALEYGTDEMEIHSDAVKPGDRVVLVDDLIATGGTAEAAVNLLRQIGAEVVAACFVIDLPALGGAARLRALDVPVFTLVEFEGH.

This sequence belongs to the purine/pyrimidine phosphoribosyltransferase family. As to quaternary structure, homodimer.

The protein localises to the cytoplasm. The catalysed reaction is AMP + diphosphate = 5-phospho-alpha-D-ribose 1-diphosphate + adenine. The protein operates within purine metabolism; AMP biosynthesis via salvage pathway; AMP from adenine: step 1/1. Catalyzes a salvage reaction resulting in the formation of AMP, that is energically less costly than de novo synthesis. The protein is Adenine phosphoribosyltransferase of Methylobacterium sp. (strain 4-46).